Reading from the N-terminus, the 445-residue chain is C4-dicarboxylate transport protein (445 aa).

8 helical membrane-spanning segments follow: residues Phe-17–Tyr-37, Leu-56–Met-76, Val-91–Val-111, Phe-157–Ala-177, Leu-200–Ile-220, Met-233–Val-253, Ile-319–Gly-339, and Ala-367–Val-387.

Belongs to the dicarboxylate/amino acid:cation symporter (DAACS) (TC 2.A.23) family.

The protein resides in the cell inner membrane. Responsible for the transport of dicarboxylates such as succinate, fumarate, and malate from the periplasm across the membrane. The sequence is that of C4-dicarboxylate transport protein from Bordetella avium (strain 197N).